The sequence spans 724 residues: Catalase-peroxidase (724 aa).

Residues 98–226 (WHSAGTYRIA…LATVMMGLIY (129 aa)) constitute a cross-link (tryptophyl-tyrosyl-methioninium (Trp-Tyr) (with M-252)). The active-site Proton acceptor is His99. Positions 226–252 (YVNPEGVDGNPDPLKTAQDMRVTFARM) form a cross-link, tryptophyl-tyrosyl-methioninium (Tyr-Met) (with W-98). His267 lines the heme b pocket.

This sequence belongs to the peroxidase family. Peroxidase/catalase subfamily. In terms of assembly, homodimer or homotetramer. It depends on heme b as a cofactor. In terms of processing, formation of the three residue Trp-Tyr-Met cross-link is important for the catalase, but not the peroxidase activity of the enzyme.

The catalysed reaction is H2O2 + AH2 = A + 2 H2O. It catalyses the reaction 2 H2O2 = O2 + 2 H2O. Bifunctional enzyme with both catalase and broad-spectrum peroxidase activity. In Vibrio cholerae serotype O1 (strain ATCC 39541 / Classical Ogawa 395 / O395), this protein is Catalase-peroxidase.